The primary structure comprises 420 residues: rRNA methyltransferase 3, mitochondrial (420 aa).

A mitochondrion-targeting transit peptide spans 1 to 40; it reads MAALVRPARFVVRPLLQVVQAWDLDARRWVRALRRSPVKV. The interval 49-88 is disordered; it reads EQKRAPGKQPRKAPSEASAQEQREKQPLEESASRAPSTWE. The segment covering 69–80 has biased composition (basic and acidic residues); the sequence is EQREKQPLEESA. Residues Gly356, Ile380, and Leu389 each coordinate S-adenosyl-L-methionine.

The protein belongs to the class IV-like SAM-binding methyltransferase superfamily. RNA methyltransferase TrmH family. Expressed at same level in normal liver and hepatocarcinoma.

It is found in the mitochondrion. It catalyses the reaction guanosine(1370) in 16S rRNA + S-adenosyl-L-methionine = 2'-O-methylguanosine(1370) in 16S rRNA + S-adenosyl-L-homocysteine + H(+). S-adenosyl-L-methionine-dependent 2'-O-ribose methyltransferase that catalyzes the formation of 2'-O-methylguanosine at position 1370 (Gm1370) in the 16S mitochondrial large subunit ribosomal RNA (mtLSU rRNA), a conserved modification in the peptidyl transferase domain of the mtLSU rRNA. Also required for formation of 2'-O-methyluridine at position 1369 (Um1369) mediated by MRM2. This Homo sapiens (Human) protein is rRNA methyltransferase 3, mitochondrial.